Reading from the N-terminus, the 229-residue chain is Endonuclease V (229 aa).

This sequence belongs to the endonuclease V family.

The protein localises to the cytoplasm. It catalyses the reaction Endonucleolytic cleavage at apurinic or apyrimidinic sites to products with a 5'-phosphate.. DNA repair enzyme involved in the repair of deaminated bases. Selectively cleaves double-stranded DNA at the second phosphodiester bond 3' to a deoxyinosine leaving behind the intact lesion on the nicked DNA. In Methanopyrus kandleri (strain AV19 / DSM 6324 / JCM 9639 / NBRC 100938), this protein is Endonuclease V.